The sequence spans 149 residues: Alpha-crystallin A chain (149 aa).

The region spanning 41–149 is the sHSP domain; that stretch reads LFRSVLESGI…DPSHSERPIP (109 aa). Residues His89, Glu91, His96, and His143 each contribute to the Zn(2+) site.

This sequence belongs to the small heat shock protein (HSP20) family. Heteropolymer composed of three CRYAA and one CRYAB subunits. Inter-subunit bridging via zinc ions enhances stability, which is crucial as there is no protein turn over in the lens. Can also form homodimers and homotetramers (dimers of dimers) which serve as the building blocks of homooligomers. Within homooligomers, the zinc-binding motif is created from residues of 3 different molecules. His-89 and Glu-91 from one molecule are ligands of the zinc ion, and His-96 and His-143 residues from additional molecules complete the site with tetrahedral coordination geometry.

It localises to the cytoplasm. The protein resides in the nucleus. Functionally, contributes to the transparency and refractive index of the lens. May act as a chaperone, preventing aggregation of various proteins under a wide range of stress conditions. In Eudromia elegans (Elegant crested-tinamou), this protein is Alpha-crystallin A chain (CRYAA).